Consider the following 611-residue polypeptide: Beta-hexosaminidase (611 aa).

The protein belongs to the glycosyl hydrolase 20 family. In terms of assembly, homodimer.

Its subcellular location is the periplasm. The enzyme catalyses Hydrolysis of terminal non-reducing N-acetyl-D-hexosamine residues in N-acetyl-beta-D-hexosaminides.. The protein operates within glycan degradation; chitin degradation. Inhibited by mercuric ions, PNP-beta-Glc, PNP-beta-Gal, PNP-alpha-GlcNAc, and PNP-beta-S-GlcNAc. Its function is as follows. Hydrolyzes aryl-N-acetyl-beta-D-glucosaminide (aryl-beta-GlcNAc), aryl-beta-GalNAc and chitin oligosaccharides. Can hydrolyze rapidly the artificial substrates p-nitrophenyl-N-acetyl-beta-D-glucosaminide (PNP-beta-GlcNAc) and 4-methylumbelliferyl-beta-GlcNAc, and is slightly active on p-nitrophenyl-beta-GalNAc. This enzyme is not processive, i.e. when it hydrolyzes (GlcNAc)n, both products, (Glc-NAc)n-1 and the terminal GlcNAc, are released before the enzyme attacks a second molecule of (GlcNAc)n or (GlcNAc)n-1. This Vibrio furnissii protein is Beta-hexosaminidase.